The primary structure comprises 249 residues: 3-deoxy-D-manno-octulosonic acid kinase (249 aa).

D175 is a catalytic residue.

Belongs to the protein kinase superfamily. KdkA/RfaP family.

The protein localises to the cell inner membrane. The enzyme catalyses an alpha-Kdo-(2-&gt;6)-lipid IVA + ATP = a 4-O-phospho-alpha-Kdo-(2-&gt;6)-lipid IVA + ADP + H(+). It participates in bacterial outer membrane biogenesis; LPS core biosynthesis. Catalyzes the ATP-dependent phosphorylation of the 3-deoxy-D-manno-octulosonic acid (Kdo) residue in Kdo-lipid IV(A) at the 4-OH position. The sequence is that of 3-deoxy-D-manno-octulosonic acid kinase from Xanthomonas campestris pv. campestris (strain 8004).